Here is a 444-residue protein sequence, read N- to C-terminus: Xaa-Pro dipeptidase (444 aa).

Mn(2+) is bound by residues D247, D258, H340, E385, and E424.

This sequence belongs to the peptidase M24B family. Bacterial-type prolidase subfamily. Mn(2+) serves as cofactor.

The catalysed reaction is Xaa-L-Pro dipeptide + H2O = an L-alpha-amino acid + L-proline. Functionally, splits dipeptides with a prolyl residue in the C-terminal position. The polypeptide is Xaa-Pro dipeptidase (Photorhabdus laumondii subsp. laumondii (strain DSM 15139 / CIP 105565 / TT01) (Photorhabdus luminescens subsp. laumondii)).